We begin with the raw amino-acid sequence, 216 residues long: Endoplasmic reticulum vesicle protein 25 (216 aa).

The first 21 residues, 1–21, serve as a signal peptide directing secretion; sequence MMVSLKSSLFFMLALLTVVHA. Topologically, residues 22-184 are lumenal; it reads LNFDIPAKTN…TNESTNERVK (163 aa). The 117-residue stretch at 34-150 folds into the GOLD domain; sequence PFCLREYVGE…LEPVEADIRR (117 aa). The chain crosses the membrane as a helical span at residues 185–205; the sequence is NFAYLTFISLFVLVIWQILYL. The Cytoplasmic portion of the chain corresponds to 206 to 216; it reads RSFFQRKHLIP.

The protein belongs to the EMP24/GP25L family.

It localises to the endoplasmic reticulum membrane. The protein localises to the golgi apparatus membrane. Functionally, constituent of COPII-coated endoplasmic reticulum-derived transport vesicles. Required for efficient transport of a subset of secretory proteins to the Golgi. Facilitates retrograde transport from the Golgi to the endoplasmic reticulum. This Schizosaccharomyces pombe (strain 972 / ATCC 24843) (Fission yeast) protein is Endoplasmic reticulum vesicle protein 25 (erv25).